The chain runs to 91 residues: Small ubiquitin-related modifier (91 aa).

The 79-residue stretch at 13-91 (EYIKIKVVGQ…EVYQEQLGGF (79 aa)) folds into the Ubiquitin-like domain. Gly90 is covalently cross-linked (Glycyl lysine isopeptide (Gly-Lys) (interchain with K-? in acceptor proteins)). A propeptide is located at residue Phe91.

It belongs to the ubiquitin family. SUMO subfamily. As to quaternary structure, covalently attached to tbx-2. Covalently attached to lin-1. Covalently attached to lin-11. Covalently attached to sop-2. Covalently attached to bet-1. In terms of processing, cleavage of precursor form by ulp-1 is necessary for function.

Its subcellular location is the cytoplasm. The protein localises to the nucleus. It is found in the cytoskeleton. It localises to the spindle. The protein resides in the chromosome. Its subcellular location is the microtubule organizing center. The protein localises to the centrosome. In terms of biological role, ubiquitin-like protein which can be covalently attached to target lysines as a monomer. Does not seem to be involved in protein degradation and may function as an antagonist of ubiquitin in the degradation process. Plays a role in a number of cellular processes such as nuclear transport, DNA replication and repair, mitosis and signal transduction. Covalent attachment to its substrates requires prior activation by the E1 complex aos-1-uba-2 and linkage to the E2 enzyme ubc-9, and can be promoted by an E3 ligase such as gei-17. Required for embryonic development, fertility, vulval morphogenesis and inhibition of vulval cell fates. Probably by sumoylating bet-1, prevents muscle myosin depletion in aging adults probably by preventing myoblast growth factor receptor egl-15 overexpression. Plays a role in the attenuation of the let-60/ras pathway. Plays a role in male tail tip morphogenesis. Plays a role in the mitochondrial stress response with its covalent attachment to transcription factors dve-1 and afts-1 negatively regulating the mitochondrial unfolded protein response. The chain is Small ubiquitin-related modifier from Caenorhabditis elegans.